Here is a 975-residue protein sequence, read N- to C-terminus: Probable outer membrane protein PmpA (975 aa).

The signal sequence occupies residues 1–51 (MNRVIEIHAHYDQRQLSQSPNTNFLVHHPYLTLIPKFLLGALIVYAPYSFA). Positions 699-975 (RSLIPTSYFG…SLSCGGYVGF (277 aa)) constitute an Autotransporter domain.

It belongs to the PMP outer membrane protein family.

It localises to the secreted. The protein resides in the cell wall. The protein localises to the cell outer membrane. The protein is Probable outer membrane protein PmpA (pmpA) of Chlamydia trachomatis serovar D (strain ATCC VR-885 / DSM 19411 / UW-3/Cx).